A 302-amino-acid polypeptide reads, in one-letter code: Protoheme IX farnesyltransferase (302 aa).

A run of 9 helical transmembrane segments spans residues 27–47, 53–73, 100–120, 121–141, 149–169, 175–195, 215–235, 237–257, and 273–293; these read VVAL…PGMV, LFGL…NHVI, LVFA…AVNV, LTAV…TVFL, IVWG…AVTG, PLLL…ALAI, VAFT…VSLV, FIIH…GIGF, and AMPT…LLLV.

It belongs to the UbiA prenyltransferase family. Protoheme IX farnesyltransferase subfamily.

The protein resides in the cell inner membrane. It carries out the reaction heme b + (2E,6E)-farnesyl diphosphate + H2O = Fe(II)-heme o + diphosphate. It functions in the pathway porphyrin-containing compound metabolism; heme O biosynthesis; heme O from protoheme: step 1/1. Its function is as follows. Converts heme B (protoheme IX) to heme O by substitution of the vinyl group on carbon 2 of heme B porphyrin ring with a hydroxyethyl farnesyl side group. The sequence is that of Protoheme IX farnesyltransferase from Thioalkalivibrio sulfidiphilus (strain HL-EbGR7).